A 172-amino-acid chain; its full sequence is RNA pyrophosphohydrolase (172 aa).

One can recognise a Nudix hydrolase domain in the interval 6–149 (GYRLNVGIVI…KRDVYRRAMK (144 aa)). Positions 38 to 59 (GGIDEGETPEQAMYRELYEEVG) match the Nudix box motif.

Belongs to the Nudix hydrolase family. RppH subfamily. A divalent metal cation serves as cofactor.

Accelerates the degradation of transcripts by removing pyrophosphate from the 5'-end of triphosphorylated RNA, leading to a more labile monophosphorylated state that can stimulate subsequent ribonuclease cleavage. This is RNA pyrophosphohydrolase from Vibrio atlanticus (strain LGP32) (Vibrio splendidus (strain Mel32)).